We begin with the raw amino-acid sequence, 519 residues long: MNLPIVNERNRPDVPRKGVQKIRTVIEGFDEITHGGLPIGRTTLVSGTSGTGKTLLAVQFLYQGIHHFDYPGLFITFEESPSDIIENAYSFGWDLQQLIDDGKLFILDASPDPEGQEVVGTFDLSALIERIQYAVRKYKAKLVSIDSVTAVFQQYDAASVVRREIFRLVARLKQLQVTSIMTTERVEEYGPIARFGVEEFVSDNVVVLRNVLEGERRRRTVEILKLRGTTHMKGEYPFTITHDGINIFPLGAMRLTQRSSNARISSGVQTLDEMCGGGFFKDSIILATGATGTGKTLLVSKFLQEGCRQRERAILFAYEESRAQLSRNASSWGIDFEEMEHKGLLKLLCTYPESAGLEDHLQMIKSEISEFKPSRIAIDSLSALARGVTNNAFRQFVIGVTGYAKQEEITGFFTNTTDQFMGAHSITESHISTITDTILMLQYVEIRGEMSRALNVFKMRGSWHDKGIREYSISHDGPDIRDSFRNYERIISGSPTRISVDEKSELSRIVRGVKDKTAE.

KaiC domains follow at residues 1–248 and 262–519; these read MNLP…INIF and ARIS…KTAE. ATP is bound by residues Gly50, Thr51, Gly52, Lys53, Thr54, Leu55, Ser90, Lys225, Leu226, Arg227, Thr229, His231, Thr241, Thr291, Gly292, Thr293, Gly294, Lys295, Thr296, and Leu297. Thr54 is a binding site for Mg(2+). Position 296 (Thr296) interacts with Mg(2+). Position 319 (Glu319) interacts with Mg(2+). Residue Trp332 participates in ATP binding. Ser432 carries the phosphoserine; by autocatalysis modification. Thr433 bears the Phosphothreonine; by autocatalysis mark. 7 residues coordinate ATP: Arg452, Lys458, Met459, Arg460, Ser462, His464, and Lys466.

The protein belongs to the KaiC family. As to quaternary structure, homohexamer; hexamerization is dependent on ATP-binding. Core component of the KaiABC complex, at least composed of a KaiC homohexamer, a KaiB dimer and two KaiA dimers. Interacts directly with SasA. Multimerizes, probably forming homohexamers, no interaction with KaiC2 or KaiC3 is seen. Interacts with KaiA. In another study interacts with itself, KaiB1, KaiB3 and KaiC3. Interacts with SasA (hik8). The cofactor is Mg(2+). Post-translationally, phosphorylated on serine and threonine residues by autocatalysis. Has a 4 step phosphorylation cycle; the autokinase acts first on Thr-433, then Ser-432. When Ser-432 is modified KaiC switches to an autophosphatase mode, acting first on phospho-Thr-433 then phospho-Ser-432.

The enzyme catalyses L-seryl-[protein] + ATP = O-phospho-L-seryl-[protein] + ADP + H(+). It catalyses the reaction L-threonyl-[protein] + ATP = O-phospho-L-threonyl-[protein] + ADP + H(+). The catalysed reaction is ATP + H2O = ADP + phosphate + H(+). With respect to regulation, the interaction with KaiA enhances its phosphorylation status, while the interaction with KaiB decreases it. Its function is as follows. Component of the oscillator and circadian clock in this organism, enhances fitness in a rhythmic environment. Autophosphorylates in the presence of KaiA, no activity is seen in its absence. In terms of biological role, central component of the KaiABC oscillator complex, which constitutes the main circadian regulator in cyanobacteria. Complex composition changes during the circadian cycle to control KaiC phosphorylation. KaiA stimulates KaiC autophosphorylation, while KaiB sequesters KaiA, leading to KaiC autodephosphorylation. Clock output pathways impact the RpaA transcriptional regulator. KaiC enhances the autophosphorylation activity of SasA, which then transfers its phosphate group to RpaA to activate it. KaiB and KaiC together enhance the phospho-RpaA dephosphatase activity of CikA. Functionally, has a weak, temperature-independent ATPase activity; ATPase activity defines the circadian period. The phosphorylation state of KaiC modulates its ATPase activity and effects KaiB binding. The sequence is that of Circadian clock oscillator protein KaiC 1 from Synechocystis sp. (strain ATCC 27184 / PCC 6803 / Kazusa).